We begin with the raw amino-acid sequence, 59 residues long: Large ribosomal subunit protein bL33 (59 aa).

This sequence belongs to the bacterial ribosomal protein bL33 family.

This chain is Large ribosomal subunit protein bL33, found in Borreliella afzelii (strain PKo) (Borrelia afzelii).